The sequence spans 201 residues: Recombination protein RecR (201 aa).

The C4-type zinc finger occupies 60–75 (CTSCGNVDTSDPCTIC). One can recognise a Toprim domain in the interval 83–178 (TTLVVVEDVS…KVTRLAHGVP (96 aa)).

This sequence belongs to the RecR family.

May play a role in DNA repair. It seems to be involved in an RecBC-independent recombinational process of DNA repair. It may act with RecF and RecO. This is Recombination protein RecR from Methylobacterium radiotolerans (strain ATCC 27329 / DSM 1819 / JCM 2831 / NBRC 15690 / NCIMB 10815 / 0-1).